We begin with the raw amino-acid sequence, 1135 residues long: MPVFHTRTIESILEPVAQQISHLVIMHEEGEVDGKAIPDLTAPVSAVQAAVSNLVRVGKETVQTTEDQILKRDMPPAFIKVENACTKLVRAAQMLQADPYSVPARDYLIDGSRGILSGTSDLLLTFDEAEVRKIIRVCKGILEYLTVAEVVETMEDLVTYTKNLGPGMTKMAKMIDERQQELTHQEHRVMLVNSMNTVKELLPVLISAMKIFVTTKNTKSQGIEEALKNRNFTVEKMSAEINEIIRVLQLTSWDEDAWASKDTEAMKRALALIDSKMNQAKGWLRDPNAPPGDAGEQAIRQILDEAGKAGELCAGKERREILGTCKTLGQMTDQLADLRARGQGATPMAMQKAQQVSQGLDLLTAKVENAARKLEAMTNSKQAIAKKIDAAQNWLADPNGGSEGEEHIRGIMSEARKVAELCEEPKERDDILRSLGEISALTAKLSDLRRHGKGDSPEARALAKQIATSLQNLQSKTNRAVANTRPVKAAVHLEGKIEQAQRWIDNPTVDDRGVGQAAIRGLVAEGRRLANVMMGPYRQDLLAKCDRVDQLAAQLADLAARGEGESPQARAIAAQLQDSLKDLKARMQEAMTQEVSDVFSDTTTPIKLLAVAATAPSDTPNREEVFEERAANFENHAARLGATAEKAAAVGTANKTTVEGIQATVKSARELTPQVVSAARILLRNPGNQAAYEHFETMKNQWIDNVEKMTGLVDEAIDTKSLLDASEEAIKKDLDKCKVAMANMQPQMLVAGATSIARRANRILLVAKREVENSEDPKFREAVKAASDELSKTISPMVMDAKAVAGNISDPGLQKSFLDSGYRILGAVAKVREAFQPQEPDFPPPPPDLEHLHLTDELAPPKPPLPEGEVPPPRPPPPEEKDEEFPEQKAGEAINQPMMMAARQLHDEARKWSSKPVTVINEAAEAGVDIDEEDDADVEFSLPSDIEDDYEPELLLMPTNQPVNQPILAAAQSLHREATKWSSKGNDIIAAAKRMALLMAEMSRLVRGGSGNKRALIQCAKDIAKASDEVTRLAKEVAKQCTDKRIRTNLLQVCERIPTISTQLKILSTVKATMLGRTNISDEESEQATEMLVHNAQNLMQSVKETVREAEAASIKIRTDAGFTLRWVRKTPWYQ.

An N-terminal globular head region spans residues 2 to 835 (PVFHTRTIES…GAVAKVREAF (834 aa)). The residue at position 100 (tyrosine 100) is a Phosphotyrosine. Residues 168–208 (MTKMAKMIDERQQELTHQEHRVMLVNSMNTVKELLPVLISA) are talin-interaction. Tandem repeats lie at residues 259-369 (ASKD…KVEN), 370-479 (AARK…KTNR), and 480-589 (AVAN…RMQE). The tract at residues 259–589 (ASKDTEAMKR…LKDLKARMQE (331 aa)) is 3 X 112 AA tandem repeats. Phosphotyrosine occurs at positions 537 and 822. Positions 836–878 (QPQEPDFPPPPPDLEHLHLTDELAPPKPPLPEGEVPPPRPPPP) are linker (Pro-rich). The interval 837–888 (PQEPDFPPPPPDLEHLHLTDELAPPKPPLPEGEVPPPRPPPPEEKDEEFPEQ) is disordered. Positions 860 to 876 (PPKPPLPEGEVPPPRPP) are enriched in pro residues. Residues 879-1135 (EEKDEEFPEQ…RWVRKTPWYQ (257 aa)) are C-terminal tail. 2 facilitates phospholipid membrane insertion regions span residues 1004-1047 (RLVR…KRIR) and 1121-1135 (AGFT…PWYQ). Tyrosine 1134 is modified (phosphotyrosine; by SRC-type Tyr-kinases).

This sequence belongs to the vinculin/alpha-catenin family. Exhibits self-association properties. Interacts with APBB1IP, NRAP and TLN1. Interacts with CTNNB1 and this interaction is necessary for its localization to the cell-cell junctions and for its function in regulating cell surface expression of E-cadherin. Post-translationally, phosphorylated; on serines, threonines and tyrosines. Phosphorylation on Tyr-1134 in activated platelets affects head-tail interactions and cell spreading but has no effect on actin binding nor on localization to focal adhesion plaques. In terms of processing, acetylated; mainly by myristic acid but also by a small amount of palmitic acid. In terms of tissue distribution, isoform Metavinculin is muscle-specific.

It is found in the cell membrane. It localises to the cell junction. The protein resides in the adherens junction. Its subcellular location is the focal adhesion. The protein localises to the cytoplasm. It is found in the cytoskeleton. It localises to the sarcolemma. The protein resides in the cell projection. Its subcellular location is the podosome. In terms of biological role, actin filament (F-actin)-binding protein involved in cell-matrix adhesion and cell-cell adhesion. Regulates cell-surface E-cadherin expression and potentiates mechanosensing by the E-cadherin complex. May also play important roles in cell morphology and locomotion. This is Vinculin (VCL) from Gallus gallus (Chicken).